Reading from the N-terminus, the 451-residue chain is Ribulose bisphosphate carboxylase large chain (451 aa).

K5 bears the N6,N6,N6-trimethyllysine mark. Residues N114 and T164 each contribute to the substrate site. The active-site Proton acceptor is the K166. K168 is a substrate binding site. Positions 192, 194, and 195 each coordinate Mg(2+). K192 is subject to N6-carboxylysine. H285 (proton acceptor) is an active-site residue. 3 residues coordinate substrate: R286, H318, and S370.

It belongs to the RuBisCO large chain family. Type I subfamily. As to quaternary structure, heterohexadecamer of 8 large chains and 8 small chains; disulfide-linked. The disulfide link is formed within the large subunit homodimers. Mg(2+) is required as a cofactor. Post-translationally, the disulfide bond which can form in the large chain dimeric partners within the hexadecamer appears to be associated with oxidative stress and protein turnover.

It localises to the plastid. Its subcellular location is the chloroplast. It carries out the reaction 2 (2R)-3-phosphoglycerate + 2 H(+) = D-ribulose 1,5-bisphosphate + CO2 + H2O. The enzyme catalyses D-ribulose 1,5-bisphosphate + O2 = 2-phosphoglycolate + (2R)-3-phosphoglycerate + 2 H(+). In terms of biological role, ruBisCO catalyzes two reactions: the carboxylation of D-ribulose 1,5-bisphosphate, the primary event in carbon dioxide fixation, as well as the oxidative fragmentation of the pentose substrate in the photorespiration process. Both reactions occur simultaneously and in competition at the same active site. This is Ribulose bisphosphate carboxylase large chain from Aristea glauca.